We begin with the raw amino-acid sequence, 471 residues long: Tryptophanase (471 aa).

Residue lysine 270 is modified to N6-(pyridoxal phosphate)lysine.

It belongs to the beta-eliminating lyase family. As to quaternary structure, homotetramer. Pyridoxal 5'-phosphate serves as cofactor.

The enzyme catalyses L-tryptophan + H2O = indole + pyruvate + NH4(+). It functions in the pathway amino-acid degradation; L-tryptophan degradation via pyruvate pathway; indole and pyruvate from L-tryptophan: step 1/1. The chain is Tryptophanase from Histophilus somni (strain 2336) (Haemophilus somnus).